Consider the following 195-residue polypeptide: Cytochrome c biogenesis ATP-binding export protein CcmA (195 aa).

The ABC transporter domain occupies 1–195; sequence MLSLHQLQFN…IKSAQILQLV (195 aa). 33–40 provides a ligand contact to ATP; sequence GANGSGKS.

This sequence belongs to the ABC transporter superfamily. CcmA exporter (TC 3.A.1.107) family. In terms of assembly, the complex is composed of two ATP-binding proteins (CcmA) and two transmembrane proteins (CcmB).

The protein resides in the cell inner membrane. The enzyme catalyses heme b(in) + ATP + H2O = heme b(out) + ADP + phosphate + H(+). In terms of biological role, part of the ABC transporter complex CcmAB involved in the biogenesis of c-type cytochromes; once thought to export heme, this seems not to be the case, but its exact role is uncertain. Responsible for energy coupling to the transport system. In Rickettsia felis (strain ATCC VR-1525 / URRWXCal2) (Rickettsia azadi), this protein is Cytochrome c biogenesis ATP-binding export protein CcmA.